The chain runs to 260 residues: GDSL esterase/lipase WDL1 (260 aa).

An N-terminal signal peptide occupies residues 1-35 (MLGFAPAPGRPLFVLFGSSIVQFSFSNGGWGAALA). The Nucleophile role is filled by serine 18. N-linked (GlcNAc...) asparagine glycans are attached at residues asparagine 83 and asparagine 150. Active-site residues include aspartate 191 and histidine 194.

Belongs to the 'GDSL' lipolytic enzyme family. As to expression, highly expressed in panicles. Expressed in shoots, mature flowers and seeds.

It is found in the endoplasmic reticulum. Its function is as follows. Involved in the organization of leaf cuticle and wax crystals. This chain is GDSL esterase/lipase WDL1, found in Oryza sativa subsp. japonica (Rice).